The chain runs to 401 residues: Adenylosuccinate synthetase (401 aa).

GTP is bound by residues 12 to 18 (GDEGKGK) and 40 to 42 (GHT). Residue aspartate 13 is the Proton acceptor of the active site. Mg(2+) is bound by residues aspartate 13 and glycine 40. IMP contacts are provided by residues 13 to 16 (DEGK), 38 to 41 (NAGH), threonine 128, arginine 142, glutamine 212, threonine 227, and arginine 290. Histidine 41 functions as the Proton donor in the catalytic mechanism. Position 286 to 292 (286 to 292 (ATTRRPR)) interacts with substrate. Residues arginine 292, 318–320 (KAD), and 390–392 (STG) each bind GTP.

The protein belongs to the adenylosuccinate synthetase family. In terms of assembly, homodimer. Mg(2+) serves as cofactor.

It localises to the cytoplasm. It catalyses the reaction IMP + L-aspartate + GTP = N(6)-(1,2-dicarboxyethyl)-AMP + GDP + phosphate + 2 H(+). Its pathway is purine metabolism; AMP biosynthesis via de novo pathway; AMP from IMP: step 1/2. Functionally, plays an important role in the de novo pathway of purine nucleotide biosynthesis. Catalyzes the first committed step in the biosynthesis of AMP from IMP. The polypeptide is Adenylosuccinate synthetase (Pseudothermotoga lettingae (strain ATCC BAA-301 / DSM 14385 / NBRC 107922 / TMO) (Thermotoga lettingae)).